Consider the following 476-residue polypeptide: Aspartyl/glutamyl-tRNA(Asn/Gln) amidotransferase subunit B (476 aa).

It belongs to the GatB/GatE family. GatB subfamily. Heterotrimer of A, B and C subunits.

It catalyses the reaction L-glutamyl-tRNA(Gln) + L-glutamine + ATP + H2O = L-glutaminyl-tRNA(Gln) + L-glutamate + ADP + phosphate + H(+). The enzyme catalyses L-aspartyl-tRNA(Asn) + L-glutamine + ATP + H2O = L-asparaginyl-tRNA(Asn) + L-glutamate + ADP + phosphate + 2 H(+). Functionally, allows the formation of correctly charged Asn-tRNA(Asn) or Gln-tRNA(Gln) through the transamidation of misacylated Asp-tRNA(Asn) or Glu-tRNA(Gln) in organisms which lack either or both of asparaginyl-tRNA or glutaminyl-tRNA synthetases. The reaction takes place in the presence of glutamine and ATP through an activated phospho-Asp-tRNA(Asn) or phospho-Glu-tRNA(Gln). The sequence is that of Aspartyl/glutamyl-tRNA(Asn/Gln) amidotransferase subunit B from Lacticaseibacillus paracasei (strain ATCC 334 / BCRC 17002 / CCUG 31169 / CIP 107868 / KCTC 3260 / NRRL B-441) (Lactobacillus paracasei).